A 1333-amino-acid polypeptide reads, in one-letter code: snRNA-activating protein complex subunit 4 (1333 aa).

The tract at residues 29-84 (HFEVSESSLSSDSEADSLPDEDLETAGAPILEEEGSSESSNDEEDPKDKALPEDPE) is disordered. Acidic residues-rich tracts occupy residues 41 to 52 (SEADSLPDEDLE) and 59 to 73 (LEEE…DEED). Position 68 is a phosphoserine (Ser-68). An SNAPC5-binding region spans residues 84 to 133 (ETCLQLNMVYQEVIREKLAEVSQLLAQNQEQQEEILFDLSGTKCPKVKDG). Residues 250–288 (EEALLGNRLDSHDWEKISNINFEGARSAEEIRKFWQSSE) form the Myb-like 1 domain. The HTH myb-type 1 domain maps to 289–343 (HPSISKQEWSTEEVERLKAIAATHGHLEWHLVAEELGTSRSAFQCLQKFQQYNKT). A DNA-binding region (H-T-H motif) is located at residues 317–341 (WHLVAEELGTSRSAFQCLQKFQQYN). The 52-residue stretch at 344 to 395 (LKRKEWTEEEDHMLTQLVQEMRVGNHIPYRKIVYFMEGRDSMQLIYRWTKSL) folds into the Myb-like 2 domain. 2 HTH myb-type domains span residues 396–451 (DPSL…HFSL) and 452–503 (KKGR…RKKQ). 2 consecutive DNA-binding regions (H-T-H motif) follow at residues 424–447 (WFKI…IRRL) and 476–499 (WARI…KILA). Residues 503 to 515 (QHLQRKRGQRPRH) show a composition bias toward basic residues. Disordered stretches follow at residues 503-558 (QHLQ…LEKS), 662-702 (LMKE…QNKQ), 811-842 (NAKN…LGSC), and 1079-1117 (LPSP…PEKA). The span at 516–546 (SSQWSSSGSSSSSSEDYGSSSGSDGSSGSEN) shows a compositional bias: low complexity. 2 stretches are compositionally biased toward polar residues: residues 672 to 686 (LPSS…NNTA) and 811 to 826 (NAKN…TGEQ). Residues 1131–1247 (AIVTWLKGCQ…NSIPTTLSPD (117 aa)) form an SNAPC2-binding region. Phosphoserine occurs at positions 1252, 1254, 1301, and 1309. Residues 1282–1333 (PAAPDPVQSHLVSPGQRAPSPGEVSAPSPLDASDGLDDLNVLRTRRARHSRR) form a disordered region. The segment covering 1324-1333 (RTRRARHSRR) has biased composition (basic residues).

As to quaternary structure, part of the SNAPc composed of 5 subunits: SNAPC1, SNAPC2, SNAPC3, SNAPC4 and SNAPC5. SNAPC4 interacts with SNAPC1, SNAPC2, SNAPC5, BRF2 and TBP.

The protein localises to the nucleus. Functionally, part of the SNAPc complex required for the transcription of both RNA polymerase II and III small-nuclear RNA genes. Binds to the proximal sequence element (PSE), a non-TATA-box basal promoter element common to these 2 types of genes. Recruits TBP and BRF2 to the U6 snRNA TATA box. This chain is snRNA-activating protein complex subunit 4, found in Mus musculus (Mouse).